Here is a 404-residue protein sequence, read N- to C-terminus: Probable tRNA sulfurtransferase (404 aa).

The THUMP domain maps to 60 to 165 (EPVAEALKNV…DEAAYISHEE (106 aa)). Residues 183-184 (ML), 208-209 (HF), R265, G287, and Q296 each bind ATP.

This sequence belongs to the ThiI family.

Its subcellular location is the cytoplasm. It catalyses the reaction [ThiI sulfur-carrier protein]-S-sulfanyl-L-cysteine + a uridine in tRNA + 2 reduced [2Fe-2S]-[ferredoxin] + ATP + H(+) = [ThiI sulfur-carrier protein]-L-cysteine + a 4-thiouridine in tRNA + 2 oxidized [2Fe-2S]-[ferredoxin] + AMP + diphosphate. The catalysed reaction is [ThiS sulfur-carrier protein]-C-terminal Gly-Gly-AMP + S-sulfanyl-L-cysteinyl-[cysteine desulfurase] + AH2 = [ThiS sulfur-carrier protein]-C-terminal-Gly-aminoethanethioate + L-cysteinyl-[cysteine desulfurase] + A + AMP + 2 H(+). It participates in cofactor biosynthesis; thiamine diphosphate biosynthesis. Functionally, catalyzes the ATP-dependent transfer of a sulfur to tRNA to produce 4-thiouridine in position 8 of tRNAs, which functions as a near-UV photosensor. Also catalyzes the transfer of sulfur to the sulfur carrier protein ThiS, forming ThiS-thiocarboxylate. This is a step in the synthesis of thiazole, in the thiamine biosynthesis pathway. The sulfur is donated as persulfide by IscS. The sequence is that of Probable tRNA sulfurtransferase from Streptococcus uberis (strain ATCC BAA-854 / 0140J).